The sequence spans 374 residues: Proton-coupled zinc antiporter SLC30A8 (374 aa).

The Cytoplasmic portion of the chain corresponds to 1 to 67; the sequence is MKGSEEAYLV…QREQTFAKKK (67 aa). The segment at 18-48 is disordered; that stretch reads YSLTKDSEKNHPSKPPLQDEENPQSKYHCHN. The Zn(2+) site is built by H45, C46, and H47. The HCH Motif; seals regulatory zinc-binding pocket signature appears at 45–47; it reads HCH. A helical transmembrane segment spans residues 68 to 88; sequence LCIASLICFVFISAEIVGGYI. The Lumenal, vesicle segment spans residues 89 to 91; the sequence is AGS. The helical transmembrane segment at 92 to 112 threads the bilayer; that stretch reads LAVVTDAAHLLVDLSSFFISL. Zn(2+) contacts are provided by H100, D104, and H131. Residues 113–134 lie on the Cytoplasmic side of the membrane; that stretch reads CSLWLSSKSSTTRLTFGWHRAE. A helical membrane pass occupies residues 135-155; it reads ILGALMSVITIWLVTGVLVYL. The Lumenal, vesicle segment spans residues 156–169; that stretch reads ACERLIRPDYTIDG. The helical transmembrane segment at 170–190 threads the bilayer; sequence TVMLITSACALGANLVLALIL. Residues 191 to 222 lie on the Cytoplasmic side of the membrane; that stretch reads HQSGHGHSHAGGKHEHMASEYKPQTNASIRAA. Residues 223–243 traverse the membrane as a helical segment; the sequence is FIHVIGDLFQSISVLISALII. Zn(2+)-binding residues include H225 and D229. Over 244–251 the chain is Lumenal, vesicle; that stretch reads YFKPEYKM. Residues 252-272 form a helical membrane-spanning segment; sequence ADPICTFIFSIFVLITTVTVL. Residues 273–374 are Cytoplasmic-facing; sequence RDLLTVLMEG…ECMFCYEPTQ (102 aa). 6 residues coordinate Zn(2+): H306, H323, H350, E357, C366, and C369.

This sequence belongs to the cation diffusion facilitator (CDF) transporter (TC 2.A.4) family. SLC30A subfamily. In terms of assembly, homodimer.

It is found in the cytoplasmic vesicle. The protein resides in the secretory vesicle membrane. It localises to the cell membrane. The catalysed reaction is Zn(2+)(in) + 2 H(+)(out) = Zn(2+)(out) + 2 H(+)(in). Proton-coupled zinc ion antiporter mediating the entry of zinc into the lumen of pancreatic beta cell secretory granules, thereby regulating insulin secretion. The polypeptide is Proton-coupled zinc antiporter SLC30A8 (slc30a8) (Xenopus tropicalis (Western clawed frog)).